Reading from the N-terminus, the 505-residue chain is UDP-N-acetylmuramyl-tripeptide synthetase (505 aa).

A UDP-N-acetyl-alpha-D-muramoyl-L-alanyl-D-glutamate-binding site is contributed by Ser-35. 118 to 124 (GTDGKSS) is a binding site for ATP. UDP-N-acetyl-alpha-D-muramoyl-L-alanyl-D-glutamate-binding positions include 163–164 (ST), Thr-190, and Arg-200. An N6-carboxylysine modification is found at Lys-232.

It belongs to the MurCDEF family. MurE subfamily. Post-translationally, carboxylation is probably crucial for Mg(2+) binding and, consequently, for the gamma-phosphate positioning of ATP.

It is found in the cytoplasm. It functions in the pathway cell wall biogenesis; peptidoglycan biosynthesis. Its function is as follows. Catalyzes the addition of an amino acid to the nucleotide precursor UDP-N-acetylmuramoyl-L-alanyl-D-glutamate (UMAG) in the biosynthesis of bacterial cell-wall peptidoglycan. This Borreliella afzelii (strain PKo) (Borrelia afzelii) protein is UDP-N-acetylmuramyl-tripeptide synthetase.